A 286-amino-acid chain; its full sequence is 2-hydroxy-6-oxo-6-phenylhexa-2,4-dienoate hydrolase (286 aa).

Residues 42 to 43 (GG), Asn-51, Asn-111, Ser-180, and Arg-190 contribute to the substrate site. The Proton acceptor role is filled by His-265. Position 266 (Trp-266) interacts with substrate.

Belongs to the AB hydrolase superfamily. BphD family. As to quaternary structure, homodimer.

The catalysed reaction is 2,6-dioxo-6-phenylhexa-3-enoate + H2O = 2-oxopent-4-enoate + benzoate + H(+). It functions in the pathway xenobiotic degradation; biphenyl degradation; 2-hydroxy-2,4-pentadienoate and benzoate from biphenyl: step 4/4. With respect to regulation, inhibited by 3-Cl HOPDA. Its function is as follows. Catalyzes an unusual C-C bond hydrolysis of 2-hydroxy-6-oxo-6-phenylhexa-2,4-dienoic acid (HOPDA) to produce benzoic acid and 2-hydroxy-2,4-pentadienoic acid (HPD). This is 2-hydroxy-6-oxo-6-phenylhexa-2,4-dienoate hydrolase (bphD) from Paraburkholderia xenovorans (strain LB400).